Here is a 126-residue protein sequence, read N- to C-terminus: Methylglyoxal synthase (126 aa).

Positions 1–126 constitute an MGS-like domain; it reads MAGGKCIALI…AERLIKTLNH (126 aa). Residues His12, Lys16, 38–41, and 59–60 each bind substrate; these read TGTT and SG. The active-site Proton donor/acceptor is Asp65. Position 92 (His92) interacts with substrate.

Belongs to the methylglyoxal synthase family.

The enzyme catalyses dihydroxyacetone phosphate = methylglyoxal + phosphate. Functionally, catalyzes the formation of methylglyoxal from dihydroxyacetone phosphate. The sequence is that of Methylglyoxal synthase from Rhizobium rhizogenes (strain K84 / ATCC BAA-868) (Agrobacterium radiobacter).